The primary structure comprises 246 residues: NAD(P)H-quinone oxidoreductase subunit K, organellar chromatophore (246 aa).

Residues Cys58, Cys59, Cys123, and Cys154 each contribute to the [4Fe-4S] cluster site.

The protein belongs to the complex I 20 kDa subunit family. As to quaternary structure, NDH-1 is composed of 14 different subunits. Subunits nuoB, C, D, E, F, and G constitute the peripheral sector of the complex. [4Fe-4S] cluster is required as a cofactor.

The protein localises to the plastid. It is found in the organellar chromatophore thylakoid membrane. It carries out the reaction a quinone + NADH + H(+) = a quinol + NAD(+). Functionally, NDH-1 shuttles electrons from NADH, via FMN and iron-sulfur (Fe-S) centers, to quinones in the respiratory chain. Couples the redox reaction to proton translocation (for every two electrons transferred, four hydrogen ions are translocated across the cytoplasmic membrane), and thus conserves the redox energy in a proton gradient. This is NAD(P)H-quinone oxidoreductase subunit K, organellar chromatophore from Paulinella chromatophora.